Consider the following 1119-residue polypeptide: Transcriptional repressor NF-X1 homolog (1119 aa).

The tract at residues 1–214 (MADTEGTSSS…EPLTEEETKI (214 aa)) is disordered. Positions 7–17 (TSSSIPTSTNS) are enriched in low complexity. Basic residues predominate over residues 18-29 (SRHRASRGRGGR). Positions 84 to 98 (ANFTFNPNAATFNPA) are enriched in low complexity. Residues 113–128 (GASTHSNQNSRQQEPS) are compositionally biased toward polar residues. Positions 143 to 154 (RQLEIQEQRGDS) are enriched in basic and acidic residues. The span at 157 to 167 (QNQSRQNNRNQ) shows a compositional bias: low complexity. Residues 174 to 193 (ANQQNKSVQNPSRNPGNSRR) are compositionally biased toward polar residues. The segment covering 198 to 214 (RRREQKEEPLTEEETKI) has biased composition (basic and acidic residues). The RING-type; degenerate zinc finger occupies 235 to 287 (CAICYTRITTRQGVWSCKTCYHIFHISTGCITDWARSSRDKEGANTWRCPTCQ). NF-X1-type zinc fingers lie at residues 330-348 (CPHPCTELCHPGPCIECKL), 383-402 (CGQHNCERICHSGDCGECTV), 439-458 (CGIHHCTKKCHDKECGECET), 500-523 (CGTPGKNHHCREKCHEGPCPPCNL), 565-584 (CGMHKCQEVCCIQDEHFCLQ), 592-611 (CGIHTCENVCHAGQCRPCLQ), 649-668 (CDHSVSHKCHGEQNCPPCTQ), 703-726 (CGVHVCQRTCHGEECEKEGEKCTK), and 735-756 (CEHPCALPCHEDSPCEPSPCKA). The R3H domain maps to 867 to 937 (IDFVKSVEKI…KRSIVLTAVR (71 aa)). Disordered stretches follow at residues 1024-1047 (VDSDDEESNVPTTSNLVSSPPKDW) and 1078-1119 (AAKK…ELLE). Over residues 1032–1041 (NVPTTSNLVS) the composition is skewed to polar residues. The segment covering 1086–1097 (PTWEDQCDEDAP) has biased composition (acidic residues).

It belongs to the NFX1 family.

The protein localises to the nucleus. In terms of biological role, may play a role in transcription regulation. In Caenorhabditis elegans, this protein is Transcriptional repressor NF-X1 homolog (nfx-1).